A 396-amino-acid polypeptide reads, in one-letter code: MAKLDAYFGEYGGQYVPQILVPALEQLEQAFIDAQEDPDFRAEFMTLLQEYAGRPTALTLCRNLTKGTKTKLYLKREDLLHGGAHKTNQVLGQALLAKRMGKDEIIAETGAGQHGVATALACALLGLKCRVYMGAKDVERQSPNVFRMELMGAEVIPVHSGSATLKDACNEALRDWSATYETAHYLLGTAAGPHPFPTIVREFQRMIGEETKMQILAREGRLPDAVIACVGGGSNAIGMFADFIEEESVKLIGVEPAGKGIDTDQHGAPLKHGKTGIFFGMKAPLMQDEHGQIEESYSVSAGLDFPSVGPQHAHLNAIGRAEYGAVTDDEALEAFKILARNEGIIPALESSHALAYALQLAQAEPEKEQLLVVNLSGRGDKDIFTVHDILKEKGEI.

K86 carries the N6-(pyridoxal phosphate)lysine modification.

The protein belongs to the TrpB family. As to quaternary structure, tetramer of two alpha and two beta chains. It depends on pyridoxal 5'-phosphate as a cofactor.

The catalysed reaction is (1S,2R)-1-C-(indol-3-yl)glycerol 3-phosphate + L-serine = D-glyceraldehyde 3-phosphate + L-tryptophan + H2O. It participates in amino-acid biosynthesis; L-tryptophan biosynthesis; L-tryptophan from chorismate: step 5/5. In terms of biological role, the beta subunit is responsible for the synthesis of L-tryptophan from indole and L-serine. The polypeptide is Tryptophan synthase beta chain (Aliivibrio fischeri (strain MJ11) (Vibrio fischeri)).